The primary structure comprises 114 residues: Abscisic stress-ripening protein 2 (114 aa).

2 disordered regions span residues 1 to 25 (MAEE…GGPV) and 88 to 114 (FHEH…HHHY). Residues 7–16 (QHHHHLFHHK) are compositionally biased toward basic residues. The segment covering 97–107 (AKKEKKEVEGG) has biased composition (basic and acidic residues).

Belongs to the abscisic acid and water stress-induced protein family.

This chain is Abscisic stress-ripening protein 2, found in Solanum lycopersicum (Tomato).